A 471-amino-acid chain; its full sequence is Light-independent protochlorophyllide reductase subunit N (471 aa).

The [4Fe-4S] cluster site is built by Cys-22, Cys-47, and Cys-107.

Belongs to the BchN/ChlN family. As to quaternary structure, protochlorophyllide reductase is composed of three subunits; ChlL, ChlN and ChlB. Forms a heterotetramer of two ChlB and two ChlN subunits. The cofactor is [4Fe-4S] cluster.

It is found in the plastid. It localises to the chloroplast. The catalysed reaction is chlorophyllide a + oxidized 2[4Fe-4S]-[ferredoxin] + 2 ADP + 2 phosphate = protochlorophyllide a + reduced 2[4Fe-4S]-[ferredoxin] + 2 ATP + 2 H2O. It functions in the pathway porphyrin-containing compound metabolism; chlorophyll biosynthesis (light-independent). Functionally, component of the dark-operative protochlorophyllide reductase (DPOR) that uses Mg-ATP and reduced ferredoxin to reduce ring D of protochlorophyllide (Pchlide) to form chlorophyllide a (Chlide). This reaction is light-independent. The NB-protein (ChlN-ChlB) is the catalytic component of the complex. The protein is Light-independent protochlorophyllide reductase subunit N of Huperzia lucidula (Shining clubmoss).